A 361-amino-acid chain; its full sequence is Rho-GTPase-activating protein 5 (361 aa).

Residues 52–245 (IFLTRRDGEK…FLINHQGSFI (194 aa)) enclose the Rho-GAP domain. Over residues 306–323 (SSATYSNSPSSNFSNMKS) the composition is skewed to low complexity. The tract at residues 306 to 345 (SSATYSNSPSSNFSNMKSSEVDPGSPPRIKSRSYSLSRSS) is disordered.

It localises to the membrane. Functionally, GTPase-activating protein for Rho1. Has a role in the negative regulation of (1-3)beta-D-glucan synthase activity and cell integrity. The protein is Rho-GTPase-activating protein 5 (rga5) of Schizosaccharomyces pombe (strain 972 / ATCC 24843) (Fission yeast).